Here is a 969-residue protein sequence, read N- to C-terminus: Alanine--tRNA ligase (969 aa).

The N-terminal 8 residues, 1–8 (MIKTLLRR), are a transit peptide targeting the mitochondrion. Residues histidine 616, histidine 620, cysteine 735, and histidine 739 each contribute to the Zn(2+) site.

It belongs to the class-II aminoacyl-tRNA synthetase family. Monomer. Zn(2+) is required as a cofactor.

It localises to the mitochondrion. It is found in the cytoplasm. It carries out the reaction tRNA(Ala) + L-alanine + ATP = L-alanyl-tRNA(Ala) + AMP + diphosphate. In terms of biological role, catalyzes the attachment of alanine to tRNA(Ala) in a two-step reaction: alanine is first activated by ATP to form Ala-AMP and then transferred to the acceptor end of tRNA(Ala). Also edits incorrectly charged tRNA(Ala) via its editing domain. This is Alanine--tRNA ligase from Candida albicans (strain SC5314 / ATCC MYA-2876) (Yeast).